Consider the following 315-residue polypeptide: Olfactory receptor 4A5 (315 aa).

Topologically, residues 1 to 23 (MRQNNNITEFVLLGFSQDPGVQK) are extracellular. An N-linked (GlcNAc...) asparagine glycan is attached at Asn6. A helical transmembrane segment spans residues 24–47 (ALFVMFLLTYLVTVVGNLLIVVDI). Residues 48-55 (IASPSLGS) lie on the Cytoplasmic side of the membrane. A helical membrane pass occupies residues 56–77 (PMYFFLACLSFIDAAYSTTISP). The Extracellular segment spans residues 78–98 (KLIVGLFCDKKTISFQGCMGQ). A disulfide bridge links Cys95 with Cys186. A helical membrane pass occupies residues 99-118 (LFIDHFFGGAEVFLLVVMAC). Over 119 to 137 (DRYVAICKPLHYLTIMNRQ) the chain is Cytoplasmic. Residues 138–156 (VCFLLLVVAMIGGFVHSAF) traverse the membrane as a helical segment. Topologically, residues 157-192 (QIVVYSLPFCGPNVIVHFSCDMHPLLELACTDTYFI) are extracellular. The chain crosses the membrane as a helical span at residues 193–216 (GLTVVVNSGAICMVIFNLLLISYG). At 217–232 (VILSSLKTYSQEKRGK) the chain is on the cytoplasmic side. Residues 233–255 (ALSTCSSGSTVVVLFFVPCIFIY) form a helical membrane-spanning segment. Over 256–266 (VRPVSNFPTDK) the chain is Extracellular. The chain crosses the membrane as a helical span at residues 267-286 (FMTVFYTIITHMLSPLIYTL). Residues 287–315 (RNSEMRNAIEKLLGKKLTIFIIGGVSVLM) are Cytoplasmic-facing.

It belongs to the G-protein coupled receptor 1 family.

The protein resides in the cell membrane. In terms of biological role, odorant receptor. The polypeptide is Olfactory receptor 4A5 (OR4A5) (Homo sapiens (Human)).